We begin with the raw amino-acid sequence, 131 residues long: Small ribosomal subunit protein uS8 (131 aa).

The protein belongs to the universal ribosomal protein uS8 family. Part of the 30S ribosomal subunit. Contacts proteins S5 and S12.

Functionally, one of the primary rRNA binding proteins, it binds directly to 16S rRNA central domain where it helps coordinate assembly of the platform of the 30S subunit. This chain is Small ribosomal subunit protein uS8, found in Malacoplasma penetrans (strain HF-2) (Mycoplasma penetrans).